Consider the following 204-residue polypeptide: Large ribosomal subunit protein bL25 (204 aa).

This sequence belongs to the bacterial ribosomal protein bL25 family. CTC subfamily. In terms of assembly, part of the 50S ribosomal subunit; part of the 5S rRNA/L5/L18/L25 subcomplex. Contacts the 5S rRNA. Binds to the 5S rRNA independently of L5 and L18.

This is one of the proteins that binds to the 5S RNA in the ribosome where it forms part of the central protuberance. The polypeptide is Large ribosomal subunit protein bL25 (Pseudomonas aeruginosa (strain LESB58)).